The sequence spans 25 residues: ATVKVTLIKSVTGRIPNHKLXVKGL.

Belongs to the universal ribosomal protein uL30 family. As to quaternary structure, part of the 50S ribosomal subunit.

The sequence is that of Large ribosomal subunit protein uL30 (rpmD) from Pseudomonas fluorescens biotype A.